The sequence spans 334 residues: Ornithine carbamoyltransferase (334 aa).

Residues Ser57–Thr60, Gln84, Arg108, and His135–Gln138 each bind carbamoyl phosphate. Residues Asn169, Asp233, and Ser237–Met238 each bind L-ornithine. Carbamoyl phosphate is bound by residues Cys275 to Leu276 and Arg320.

Belongs to the aspartate/ornithine carbamoyltransferase superfamily. OTCase family.

Its subcellular location is the cytoplasm. The catalysed reaction is carbamoyl phosphate + L-ornithine = L-citrulline + phosphate + H(+). It functions in the pathway amino-acid biosynthesis; L-arginine biosynthesis; L-arginine from L-ornithine and carbamoyl phosphate: step 1/3. Reversibly catalyzes the transfer of the carbamoyl group from carbamoyl phosphate (CP) to the N(epsilon) atom of ornithine (ORN) to produce L-citrulline. This is Ornithine carbamoyltransferase from Vibrio campbellii (strain ATCC BAA-1116).